The chain runs to 326 residues: (+)-T-muurolol synthase ((2E,6E)-farnesyl diphosphate cyclizing) (326 aa).

Residues aspartate 81 and aspartate 85 each coordinate Mg(2+). The short motif at 81–85 is the DDXXD motif element; the sequence is DDQCD. Position 175 (arginine 175) interacts with substrate. Mg(2+) contacts are provided by asparagine 221 and serine 225. Position 228 (lysine 228) interacts with substrate. Position 229 (glutamate 229) interacts with Mg(2+). 309-310 provides a ligand contact to substrate; the sequence is RY.

Belongs to the terpene synthase family. Mg(2+) serves as cofactor.

It carries out the reaction (2E,6E)-farnesyl diphosphate + H2O = (+)-T-muurolol + diphosphate. It participates in secondary metabolite biosynthesis; terpenoid biosynthesis. Functionally, catalyzes the conversion of (2E,6E)-farnesyl diphosphate (FPP) into (+)-T-muurolol via a 1,10-cyclization, which requires isomerization of FPP to nerolidyl diphosphate (NPP) and then abstraction of the pyrophosphate from intermediate NPP leading to a (E,Z)-germacradienyl (helminthogermacradienyl) cation. In Roseiflexus castenholzii (strain DSM 13941 / HLO8), this protein is (+)-T-muurolol synthase ((2E,6E)-farnesyl diphosphate cyclizing).